Reading from the N-terminus, the 475-residue chain is Ribulose bisphosphate carboxylase large chain (475 aa).

A propeptide spanning residues 1 to 2 (MS) is cleaved from the precursor. The residue at position 3 (proline 3) is an N-acetylproline. Lysine 14 carries the N6,N6,N6-trimethyllysine modification. Residues asparagine 123 and threonine 173 each contribute to the substrate site. Lysine 175 (proton acceptor) is an active-site residue. Residue lysine 177 coordinates substrate. Mg(2+) is bound by residues lysine 201, aspartate 203, and glutamate 204. Lysine 201 carries the post-translational modification N6-carboxylysine. Histidine 294 functions as the Proton acceptor in the catalytic mechanism. Residues arginine 295, histidine 327, and serine 379 each coordinate substrate.

Belongs to the RuBisCO large chain family. Type I subfamily. As to quaternary structure, heterohexadecamer of 8 large chains and 8 small chains; disulfide-linked. The disulfide link is formed within the large subunit homodimers. Mg(2+) serves as cofactor. In terms of processing, the disulfide bond which can form in the large chain dimeric partners within the hexadecamer appears to be associated with oxidative stress and protein turnover.

Its subcellular location is the plastid. It localises to the chloroplast. It carries out the reaction 2 (2R)-3-phosphoglycerate + 2 H(+) = D-ribulose 1,5-bisphosphate + CO2 + H2O. It catalyses the reaction D-ribulose 1,5-bisphosphate + O2 = 2-phosphoglycolate + (2R)-3-phosphoglycerate + 2 H(+). In terms of biological role, ruBisCO catalyzes two reactions: the carboxylation of D-ribulose 1,5-bisphosphate, the primary event in carbon dioxide fixation, as well as the oxidative fragmentation of the pentose substrate in the photorespiration process. Both reactions occur simultaneously and in competition at the same active site. This Amborella trichopoda protein is Ribulose bisphosphate carboxylase large chain.